The sequence spans 320 residues: ATP-dependent 6-phosphofructokinase (320 aa).

Residue glycine 11 participates in ATP binding. 21–25 (RAVVR) is a binding site for ADP. ATP-binding positions include 72–73 (RY) and 102–105 (GDGS). Aspartate 103 is a binding site for Mg(2+). 125–127 (TID) serves as a coordination point for substrate. Aspartate 127 serves as the catalytic Proton acceptor. An ADP-binding site is contributed by arginine 154. Substrate is bound by residues arginine 162 and 169 to 171 (MGR). ADP is bound by residues 185-187 (GAD), arginine 211, and 213-215 (KKH). Residues glutamate 222, arginine 243, and 249–252 (HVVR) contribute to the substrate site.

The protein belongs to the phosphofructokinase type A (PFKA) family. ATP-dependent PFK group I subfamily. Prokaryotic clade 'B1' sub-subfamily. In terms of assembly, homotetramer. The cofactor is Mg(2+).

Its subcellular location is the cytoplasm. It catalyses the reaction beta-D-fructose 6-phosphate + ATP = beta-D-fructose 1,6-bisphosphate + ADP + H(+). It participates in carbohydrate degradation; glycolysis; D-glyceraldehyde 3-phosphate and glycerone phosphate from D-glucose: step 3/4. Its activity is regulated as follows. Allosterically activated by ADP and other diphosphonucleosides, and allosterically inhibited by phosphoenolpyruvate. Catalyzes the phosphorylation of D-fructose 6-phosphate to fructose 1,6-bisphosphate by ATP, the first committing step of glycolysis. This Enterococcus faecalis (strain ATCC 700802 / V583) protein is ATP-dependent 6-phosphofructokinase.